A 145-amino-acid chain; its full sequence is Protein X (145 aa).

The mitochondrial targeting sequence stretch occupies residues 68 to 117; that stretch reads PCALRFTSARRMETTVNAHQVLPKVLHKRTLGLSAMSTTDLEAYFKDCVF.

This sequence belongs to the orthohepadnavirus protein X family. As to quaternary structure, may form homodimer. May interact with host CEBPA, CFLAR, CREB1, DDB1, E4F1, HBXIP, HSPD1/HSP60, NFKBIA, POLR2E and SMAD4. Interacts with host SMC5-SMC6 complex and induces its degradation. Interacts with host TRPC4AP; leading to prevent ubiquitination of TRPC4AP. Interacts with host PLSCR1; this interaction promotes ubiquitination and degradation of HBx and impairs HBx-mediated cell proliferation. A fraction may be phosphorylated in insect cells and HepG2 cells, a human hepatoblastoma cell line. Phosphorylated in vitro by host protein kinase C or mitogen-activated protein kinase. N-acetylated in insect cells.

The protein resides in the host cytoplasm. It is found in the host nucleus. The protein localises to the host mitochondrion. In terms of biological role, multifunctional protein that plays a role in silencing host antiviral defenses and promoting viral transcription. Does not seem to be essential for HBV infection. May be directly involved in development of cirrhosis and liver cancer (hepatocellular carcinoma). Most of cytosolic activities involve modulation of cytosolic calcium. The effect on apoptosis is controversial depending on the cell types in which the studies have been conducted. May induce apoptosis by localizing in mitochondria and causing loss of mitochondrial membrane potential. May also modulate apoptosis by binding host CFLAR, a key regulator of the death-inducing signaling complex (DISC). Promotes viral transcription by using the host E3 ubiquitin ligase DDB1 to target the SMC5-SMC6 complex to proteasomal degradation. This host complex would otherwise bind to viral episomal DNA, and prevents its transcription. Moderately stimulates transcription of many different viral and cellular transcription elements. Promoters and enhancers stimulated by HBx contain DNA binding sites for NF-kappa-B, AP-1, AP-2, c-EBP, ATF/CREB, or the calcium-activated factor NF-AT. The sequence is that of Protein X from Homo sapiens (Human).